Here is a 172-residue protein sequence, read N- to C-terminus: 3-hydroxydecanoyl-[acyl-carrier-protein] dehydratase (172 aa).

H71 is a catalytic residue.

This sequence belongs to the thioester dehydratase family. FabA subfamily. In terms of assembly, homodimer.

It localises to the cytoplasm. It catalyses the reaction a (3R)-hydroxyacyl-[ACP] = a (2E)-enoyl-[ACP] + H2O. It carries out the reaction (3R)-hydroxydecanoyl-[ACP] = (2E)-decenoyl-[ACP] + H2O. The enzyme catalyses (2E)-decenoyl-[ACP] = (3Z)-decenoyl-[ACP]. It participates in lipid metabolism; fatty acid biosynthesis. Its function is as follows. Necessary for the introduction of cis unsaturation into fatty acids. Catalyzes the dehydration of (3R)-3-hydroxydecanoyl-ACP to E-(2)-decenoyl-ACP and then its isomerization to Z-(3)-decenoyl-ACP. Can catalyze the dehydratase reaction for beta-hydroxyacyl-ACPs with saturated chain lengths up to 16:0, being most active on intermediate chain length. This chain is 3-hydroxydecanoyl-[acyl-carrier-protein] dehydratase, found in Maricaulis maris (strain MCS10) (Caulobacter maris).